The following is a 397-amino-acid chain: Homeobox protein knotted-1-like 2 (397 aa).

Disordered stretches follow at residues 43 to 68, 172 to 191, and 233 to 276; these read TFHL…SPGT, FEAR…DPEL, and NNNA…PRAE. Residues 49 to 58 are compositionally biased toward gly residues; the sequence is SGGGGGGGSG. Residues 279–299 enclose the ELK domain; that stretch reads ELKNHLLRKYSGYLSSLKQEL. The homeobox; TALE-type DNA-binding region spans 300-363; sequence SKKKKKGKLP…NQRKRHWKPS (64 aa).

Belongs to the TALE/KNOX homeobox family. In terms of tissue distribution, expressed only in the stems.

It localises to the nucleus. Functionally, probably binds to the DNA sequence 5'-TGAC-3'. The sequence is that of Homeobox protein knotted-1-like 2 from Malus domestica (Apple).